A 185-amino-acid polypeptide reads, in one-letter code: Early nodulin-like protein 17 (185 aa).

Residues 1 to 21 (MARRDQLVSFLCFFLIVSAVA) form the signal peptide. Residues 37–137 (KQYVVGGRSG…GQRLMINVDS (101 aa)) enclose the Phytocyanin domain. Residues Asn-79 and Asn-94 are each glycosylated (N-linked (GlcNAc...) asparagine). An intrachain disulfide couples Cys-93 to Cys-125. Positions 136-155 (DSAPSPSPSPSPAPQEAATA) are disordered. The GPI-anchor amidated serine moiety is linked to residue Ser-156. A propeptide spans 157–185 (AATSSSAATAAHALLLAAMAMMGLILGEW) (removed in mature form).

The protein belongs to the early nodulin-like (ENODL) family. In terms of tissue distribution, expressed ubiquitously. Accumulates mainly in anthers, stigmas and ovaries.

It is found in the cell membrane. Functionally, may act as a carbohydrate transporter. Required for male fertility and seed yield. This is Early nodulin-like protein 17 from Oryza sativa subsp. japonica (Rice).